The chain runs to 250 residues: mRNA-decapping protein g5R (250 aa).

In terms of domain architecture, Nudix hydrolase spans 97-243; it reads QKFRKNWLLP…IIGPAFNFIK (147 aa). Residues 132–153 carry the Nudix box motif; the sequence is GKPKEDESDLTCAIREFEEETG. Residue E138 participates in Mg(2+) binding. E147 acts as the Nucleophile in catalysis. Residues E151 and D173 each coordinate Mg(2+).

Belongs to the Nudix hydrolase family. DIPP subfamily. In terms of assembly, interacts with host RPL23A. Requires Mg(2+) as cofactor. Mn(2+) is required as a cofactor.

It localises to the host rough endoplasmic reticulum. It carries out the reaction diphospho-myo-inositol polyphosphate + H2O = myo-inositol polyphosphate + phosphate.. Functionally, decapping enzyme required for the removal of the 5'-end m7GpppN cap tethered to viral and host mRNAs to allow their decay in cells. May therefore accelerate viral and cellular mRNA turnover to eliminate competing host mRNAs and allow stage-specific synthesis of viral proteins. Acceleration of the turnover of cellular transcripts may even promote the shutoff of host protein synthesis. In addition to the mRNA cap, g5R also efficiently hydrolyzes diphosphoinositol polyphosphates. Down-regulation of the level of PP-InsP5 (diphosphoinositol pentakisphosphate) may play a role in viral manipulation of the cellular secretory pathway, a step necessary for the formation of virions. Binds viral and cellular poly(A) mRNAs, thereby decreasing both types of mRNAs. The polypeptide is mRNA-decapping protein g5R (African swine fever virus (isolate Tick/South Africa/Pretoriuskop Pr4/1996) (ASFV)).